The primary structure comprises 427 residues: Aspartate aminotransferase, mitochondrial (427 aa).

A mitochondrion-targeting transit peptide spans 1-26 (MALLKSRLLVGVARCQPCLAAVQGRA). Substrate-binding residues include glycine 62, tryptophan 159, and asparagine 212. At lysine 276 the chain carries N6-(pyridoxal phosphate)lysine. Residue arginine 404 coordinates substrate.

It belongs to the class-I pyridoxal-phosphate-dependent aminotransferase family. In terms of assembly, homodimer. It depends on pyridoxal 5'-phosphate as a cofactor.

The protein localises to the mitochondrion matrix. The enzyme catalyses L-aspartate + 2-oxoglutarate = oxaloacetate + L-glutamate. It catalyses the reaction L-kynurenine + 2-oxoglutarate = kynurenate + L-glutamate + H2O. Functionally, catalyzes the irreversible transamination of the L-tryptophan metabolite L-kynurenine to form kynurenic acid (KA). As a member of the malate-aspartate shuttle, it has a key role in the intracellular NAD(H) redox balance. Is important for metabolite exchange between mitochondria and cytosol, and for amino acid metabolism. The polypeptide is Aspartate aminotransferase, mitochondrial (got2) (Xenopus tropicalis (Western clawed frog)).